The following is a 1392-amino-acid chain: ENHANCER OF AG-4 protein 2 (1392 aa).

Residues 20–77 (LGDLVLAKVKGFPAWPAKISRPEDWDRAPDPKKYFVQFFGTEEIAFVAPPDIQAFTSE) form the PWWP domain. Residues 184–194 (ESKVKTTSPVS) are compositionally biased toward polar residues. Disordered stretches follow at residues 184-354 (ESKV…STGT), 384-428 (KRQR…PAAQ), 575-613 (KKPQ…GERL), and 723-766 (QGHH…GGSL). Composition is skewed to basic and acidic residues over residues 196-215 (SLEH…DKGT), 239-258 (KEAG…DKSN), and 311-345 (LESE…KCEI). Polar residues predominate over residues 391–400 (EHATSPSFSG). Positions 401–417 (SRDKSGKGHLEQKDRSS) are enriched in basic and acidic residues. Polar residues-rich tracts occupy residues 591–601 (KISSSQSQPAN) and 725–744 (HHQQ…SRNQ). One can recognise a CID domain in the interval 771 to 912 (EAAISRDAFE…RYIDDIRASG (142 aa)). Disordered regions lie at residues 957–986 (FFSS…AGER), 1014–1356 (LEME…NYQP), and 1369–1392 (PGHT…WRPA). Residues 1059–1129 (EDSPPLPQES…SPPPPPPPPS (71 aa)) are compositionally biased toward pro residues. Over residues 1157 to 1175 (LSHQTYPGSMQQDRSSIFT) the composition is skewed to polar residues. Positions 1215–1225 (SSREPSSFTSS) are enriched in low complexity. Polar residues-rich tracts occupy residues 1240-1255 (EASS…TPLS) and 1265-1284 (APSS…QHSY). Residues 1293–1306 (QRDDARRYRNEEPW) show a composition bias toward basic and acidic residues. Residues 1311 to 1320 (SGHSAENQNG) are compositionally biased toward polar residues.

As to expression, expressed in the inflorescence meristem, floral primordia, inflorescence stem, and floral pedicels. Also detected in the shoot apical meristem, stems, leaves, embryos, and roots.

It localises to the nucleus. Its function is as follows. Transcription factor that functions as a repressor of flowering by enhancing the expression of several genes that delay flowering including FLC, FLM/MAF1, MAF2 and SVP. Also acts in the floral homeotic AGAMOUS (AG) pathway, specifically by processing the AGAMOUS pre-mRNA. Functions in association with HUA1 and HEN4 in AG pre-mRNA processing. Involved in all three aspects of the AG functions, the specification of stamen and carpel identities, the control of floral determinacy, and the spatial restriction of AP1 expression. Acts as a transcription regulator that controls anthocyanin accumulation. The polypeptide is ENHANCER OF AG-4 protein 2 (Arabidopsis thaliana (Mouse-ear cress)).